The sequence spans 125 residues: Unclassified hydrophobin 8 (125 aa).

The N-terminal stretch at 1–20 (MMFSKPVVLATTALATFAAA) is a signal peptide. Intrachain disulfides connect Cys-31–Cys-105, Cys-38–Cys-99, Cys-39–Cys-90, and Cys-106–Cys-119.

This sequence belongs to the fungal hydrophobin family. Self-assembles to form functional amyloid fibrils called rodlets. Self-assembly into fibrillar rodlets occurs spontaneously at hydrophobic:hydrophilic interfaces and the rodlets further associate laterally to form amphipathic monolayers.

It is found in the secreted. The protein localises to the cell wall. Aerial growth, conidiation, and dispersal of filamentous fungi in the environment rely upon a capability of their secreting small amphipathic proteins called hydrophobins (HPBs) with low sequence identity. Class I can self-assemble into an outermost layer of rodlet bundles on aerial cell surfaces, conferring cellular hydrophobicity that supports fungal growth, development and dispersal; whereas Class II form highly ordered films at water-air interfaces through intermolecular interactions but contribute nothing to the rodlet structure. Hydph8 is an unclassified hydrophobin involved in mycelial growth. The sequence is that of Unclassified hydrophobin 8 from Pleurotus ostreatus (strain PC15) (Oyster mushroom).